The chain runs to 790 residues: Ice-structuring glycoprotein (790 aa).

Positions 1–5 are excised as a propeptide; the sequence is VTAAP.

In terms of processing, O-glycosylated; contains disaccharide galactose-N-acetylgalactosamine attached to threonines in AFGP8 and AFGP7. As to expression, synthesized by the liver and secreted into the blood from which they become distributed to almost the entire extracellular space.

Its subcellular location is the secreted. In terms of biological role, antifreeze proteins lower the blood freezing point. The sequence is that of Ice-structuring glycoprotein (afgp8) from Notothenia neglecta (Yellowbelly rockcod).